Consider the following 551-residue polypeptide: Urocanate hydratase (551 aa).

NAD(+) contacts are provided by residues 48 to 49 (GG), Q126, 172 to 174 (GMG), E192, R197, 238 to 239 (NA), 259 to 263 (QTSAH), 269 to 270 (YI), and Y318. The active site involves C406. Residue G488 coordinates NAD(+).

Belongs to the urocanase family. The cofactor is NAD(+).

It is found in the cytoplasm. The enzyme catalyses 4-imidazolone-5-propanoate = trans-urocanate + H2O. It functions in the pathway amino-acid degradation; L-histidine degradation into L-glutamate; N-formimidoyl-L-glutamate from L-histidine: step 2/3. Functionally, catalyzes the conversion of urocanate to 4-imidazolone-5-propionate. This chain is Urocanate hydratase, found in Symbiobacterium thermophilum (strain DSM 24528 / JCM 14929 / IAM 14863 / T).